Reading from the N-terminus, the 425-residue chain is MSISNQLFDRAQAIIPGGVNSPARAFNGVGGDPLFIEKAQGAYIYDVDKKSYIDYVGSWGPMILGHNHPEIKAAVIAAVENGLSFGAPTEIEIIMAEKVKSLVPSMEQVRMVSSGTEATMSAIRLARGYTGRDKILKFEGNYHGHSDSLLVKAGSGALTLGQPSSPGIPADFAKHTLTATYNDLASVQQLFTEYKDQIACIIVEPVAGNMNCILPQEGFLQGLREICDANDALLILDEVMTGFRVALGGAQAYYDIKPDLTTLGKVIGGGMPVGAFGGSKKVMQHIAPTGPVYQAGTLSGNPIAMHAGLAALTALDRPEYAQLAEKTKKLALGLKRVAKEENVPLAINYAGGMFGFFFTEAEQVSNYTQACACDIEKFKKFFHLMLEQGIYLAPSAFEAGFLSLAHSDQDIEDTLTAAKKAFSML.

K265 is subject to N6-(pyridoxal phosphate)lysine.

The protein belongs to the class-III pyridoxal-phosphate-dependent aminotransferase family. HemL subfamily. As to quaternary structure, homodimer. Pyridoxal 5'-phosphate serves as cofactor.

The protein localises to the cytoplasm. The catalysed reaction is (S)-4-amino-5-oxopentanoate = 5-aminolevulinate. It participates in porphyrin-containing compound metabolism; protoporphyrin-IX biosynthesis; 5-aminolevulinate from L-glutamyl-tRNA(Glu): step 2/2. This is Glutamate-1-semialdehyde 2,1-aminomutase from Psychromonas ingrahamii (strain DSM 17664 / CCUG 51855 / 37).